Here is an 84-residue protein sequence, read N- to C-terminus: Putative defensin-like protein 114 (84 aa).

Positions 1 to 24 (MAITKKCFAAFVLILLFVMPFVYC) are cleaved as a signal peptide. Cystine bridges form between Cys-41–Cys-81, Cys-47–Cys-69, Cys-54–Cys-79, and Cys-58–Cys-80.

This sequence belongs to the DEFL family.

It is found in the secreted. This Arabidopsis thaliana (Mouse-ear cress) protein is Putative defensin-like protein 114.